The chain runs to 217 residues: Small ribosomal subunit protein uS3 (217 aa).

Positions 38-106 (IRQLIQTKLA…QVHINIVEIK (69 aa)) constitute a KH type-2 domain.

The protein belongs to the universal ribosomal protein uS3 family. In terms of assembly, part of the 30S ribosomal subunit. Forms a tight complex with proteins S10 and S14.

Binds the lower part of the 30S subunit head. Binds mRNA in the 70S ribosome, positioning it for translation. The polypeptide is Small ribosomal subunit protein uS3 (Lactococcus lactis subsp. cremoris (strain MG1363)).